The primary structure comprises 208 residues: MMNFNNVFRWHLPFLFLVLLTFRAAAADTLLILGDSLSAGYRMSASAAWPALLNDKWQSKTSVVNASISGDTSQQGLARLPALLKQHQPRWVLVELGGNDGLRGFQPQQTEQTLRQILQDVKAANAEPLLMQIRLPANYGRRYNEAFSAIYPKLAKEFDVPLLPFFMEEVYLKPQWMQDDGIHPNRDAQPFIADWMAKQLQPLVNHDS.

An N-terminal signal peptide occupies residues 1–26 (MMNFNNVFRWHLPFLFLVLLTFRAAA). The active-site Nucleophile is the Ser-36. Residues Gly-70 and Asn-99 each contribute to the substrate site. Residues Asp-180 and His-183 contribute to the active site.

The protein belongs to the 'GDSL' lipolytic enzyme family. Monomer or homotetramer.

It is found in the periplasm. The catalysed reaction is a fatty acyl-CoA + H2O = a fatty acid + CoA + H(+). It carries out the reaction hexadecanoyl-CoA + H2O = hexadecanoate + CoA + H(+). The enzyme catalyses (9Z)-hexadecenoyl-CoA + H2O = (9Z)-hexadecenoate + CoA + H(+). It catalyses the reaction octadecanoyl-CoA + H2O = octadecanoate + CoA + H(+). The catalysed reaction is (9Z)-octadecenoyl-CoA + H2O = (9Z)-octadecenoate + CoA + H(+). It carries out the reaction (9Z)-octadecenoyl-[ACP] + H2O = (9Z)-octadecenoate + holo-[ACP] + H(+). The enzyme catalyses (11Z)-octadecenoyl-CoA + H2O = (11Z)-octadecenoate + CoA + H(+). It catalyses the reaction tetradecanoyl-CoA + H2O = tetradecanoate + CoA + H(+). The catalysed reaction is (5Z,8Z,11Z,14Z)-eicosatetraenoyl-CoA + H2O = (5Z,8Z,11Z,14Z)-eicosatetraenoate + CoA + H(+). It carries out the reaction dodecanoyl-CoA + H2O = dodecanoate + CoA + H(+). The enzyme catalyses decanoyl-CoA + H2O = decanoate + CoA + H(+). It catalyses the reaction hexanoyl-CoA + H2O = hexanoate + CoA + H(+). The catalysed reaction is a 1-acyl-sn-glycero-3-phosphocholine + H2O = sn-glycerol 3-phosphocholine + a fatty acid + H(+). It carries out the reaction a phenyl acetate + H2O = a phenol + acetate + H(+). The enzyme catalyses a butanoate ester + H2O = an aliphatic alcohol + butanoate + H(+). It catalyses the reaction a hexanoate ester + H2O = an aliphatic alcohol + hexanoate + H(+). The catalysed reaction is an octanoate ester + H2O = an aliphatic alcohol + octanoate + H(+). Its function is as follows. TesA is a multifunctional esterase that can act as a thioesterase, arylesterase, lysophospholipase and protease. The sequence is that of Thioesterase 1/protease 1/lysophospholipase L1 (tesA) from Escherichia coli O6:H1 (strain CFT073 / ATCC 700928 / UPEC).